The sequence spans 493 residues: Glutamate--tRNA ligase (493 aa).

The 'HIGH' region signature appears at 9-19 (PSPTGFVHIGS). Residues 258-262 (KLSKR) carry the 'KMSKS' region motif. Residue Lys-261 coordinates ATP.

It belongs to the class-I aminoacyl-tRNA synthetase family. Glutamate--tRNA ligase type 1 subfamily. As to quaternary structure, monomer.

Its subcellular location is the cytoplasm. It catalyses the reaction tRNA(Glu) + L-glutamate + ATP = L-glutamyl-tRNA(Glu) + AMP + diphosphate. In terms of biological role, catalyzes the attachment of glutamate to tRNA(Glu) in a two-step reaction: glutamate is first activated by ATP to form Glu-AMP and then transferred to the acceptor end of tRNA(Glu). The polypeptide is Glutamate--tRNA ligase (Clostridioides difficile (strain 630) (Peptoclostridium difficile)).